The following is a 95-amino-acid chain: Feather keratin B-4 (95 aa).

Position 1 is an N-acetylserine (S1).

It belongs to the avian keratin family. As to quaternary structure, the avian keratins (F-ker, S-ker, C-ker and B-ker) are a complex mixture of very similar polypeptides.

The polypeptide is Feather keratin B-4 (Columba livia (Rock dove)).